A 198-amino-acid chain; its full sequence is Large ribosomal subunit protein bL12m (198 aa).

Residues 1–36 (MLPAAARPLWGPCLGLRAAAFRLARRQVPCVCAVRH) constitute a mitochondrion transit peptide. Lys-125, Lys-138, Lys-142, and Lys-144 each carry N6-acetyllysine. Lys-150 carries the N6-acetyllysine; alternate modification. Lys-150 is modified (N6-succinyllysine; alternate). Lys-150 is covalently cross-linked (Glycyl lysine isopeptide (Lys-Gly) (interchain with G-Cter in ubiquitin)). At Lys-162 the chain carries N6-succinyllysine. Residues Lys-163 and Lys-173 each carry the N6-acetyllysine modification. Position 178 is an N6-acetyllysine; alternate (Lys-178). At Lys-178 the chain carries N6-succinyllysine; alternate. The residue at position 185 (Lys-185) is an N6-acetyllysine.

The protein belongs to the bacterial ribosomal protein bL12 family. In terms of assembly, component of the mitochondrial large ribosomal subunit (mt-LSU). Mature mammalian 55S mitochondrial ribosomes consist of a small (28S) and a large (39S) subunit. The 28S small subunit contains a 12S ribosomal RNA (12S mt-rRNA) and 30 different proteins. The 39S large subunit contains a 16S rRNA (16S mt-rRNA), a copy of mitochondrial valine transfer RNA (mt-tRNA(Val)), which plays an integral structural role, and 52 different proteins. bL12m interacts with NOA1. In terms of processing, two mature forms are produced by differential two-step proteolytic cleavage. Cleaved by the mitochondrial processing protease to produce the long mature form and subsequently by the mitochondrial intermediate protease to produce the short mature form. Post-translationally, in the presence of CUL3, undergoes 'Lys-63'-linked ubiquitination at Lys-150 which results in proteasomal degradation.

It is found in the mitochondrion matrix. As a component of the mitochondrial large ribosomal subunit, plays a role in mitochondrial translation. When present in mitochondria as a free protein not associated with the ribosome, associates with mitochondrial RNA polymerase POLRMT to activate transcription. Required for POLRMT stability. This chain is Large ribosomal subunit protein bL12m (MRPL12), found in Homo sapiens (Human).